The sequence spans 273 residues: Large ribosomal subunit protein uL2cz/uL2cy (273 aa).

2 disordered regions span residues Met-1 to Arg-27 and Pro-225 to Lys-273.

It belongs to the universal ribosomal protein uL2 family. Part of the 50S ribosomal subunit.

It is found in the plastid. The protein resides in the chloroplast. In Lolium perenne (Perennial ryegrass), this protein is Large ribosomal subunit protein uL2cz/uL2cy (rpl2-A).